A 451-amino-acid chain; its full sequence is Tubulin gamma-2 chain (451 aa).

Ser-131 bears the Phosphoserine; by BRSK1 mark. A GTP-binding site is contributed by 142–148 (AGGTGSG).

The protein belongs to the tubulin family. In terms of assembly, component of the gamma-tubulin ring complex (gTuRC) consisting of TUBGCP2, TUBGCP3, TUBGCP4, TUBGCP5 and TUBGCP6 and gamma-tubulin TUBG1 or TUBG2. TUBGCP2, TUBGCP3, TUBGCP4, TUBGCP5 and TUBGCP6 assemble in a 5:5:2:1:1 stoichiometry; each is associated with a gamma-tubulin, thereby arranging 14 gamma-tubulins in a helical manner. Gamma-tubulin at the first position is blocked by TUBGCP3 at the last position, allowing 13 protafilaments to grow into a microtubule. Interacts with alpha-beta tubulin heterodimers; the interaction allows microtubules to nucleate from the gTuRC. In terms of processing, phosphorylation at Ser-131 by BRSK1 regulates centrosome duplication, possibly by mediating relocation of gamma-tubulin and its associated proteins from the cytoplasm to the centrosome.

It is found in the cytoplasm. The protein localises to the cytoskeleton. The protein resides in the microtubule organizing center. Its subcellular location is the centrosome. In terms of biological role, tubulin is the major constituent of microtubules, protein filaments consisting of alpha- and beta-tubulin heterodimers. Gamma-tubulin is a key component of the gamma-tubulin ring complex (gTuRC) which mediates microtubule nucleation. The gTuRC regulates the minus-end nucleation of alpha-beta tubulin heterodimers that grow into microtubule protafilaments, a critical step in centrosome duplication and spindle formation. This is Tubulin gamma-2 chain (Tubg2) from Mus musculus (Mouse).